Consider the following 496-residue polypeptide: Fascin (496 aa).

This sequence belongs to the fascin family.

The protein resides in the cytoplasm. It is found in the cytoskeleton. Acts as an actin bundling protein. The chain is Fascin from Strongylocentrotus purpuratus (Purple sea urchin).